We begin with the raw amino-acid sequence, 754 residues long: Gelsolin, cytoplasmic (754 aa).

Residues 1–120 (MVPAFEGAGA…RYLKGGVASG (120 aa)) are actin-severing. The stretch at 22–71 (FEVVPYPKEKYGQFYQGDSYIVLYTRDVNGNLSWDLHFWLGSETSQDEAG) is one Gelsolin-like 1 repeat. The segment at 68 to 71 (DEAG) is actin-actin interfilament contact point. A 1,2-diacyl-sn-glycero-3-phospho-(1D-myo-inositol-4,5-bisphosphate) contacts are provided by residues 101-108 (LFLSRFKK) and 133-141 (RLFHVKGRR). A Gelsolin-like 2 repeat occupies 143-183 (IRIRQVEVGVGSMNKGDCFILDCGSQVYAYMGPSSRKMDRL). A disordered region spans residues 209–238 (TASGSEAGESSPGLGGGSPDDVADEDTGVD). Residues 210 to 220 (ASGSEAGESSP) show a composition bias toward low complexity. Gelsolin-like repeat units lie at residues 266-306 (NMIG…KEKV), 414-463 (LKLE…DEKA), 538-580 (FDTR…EEKA), and 643-684 (LRVN…QEKE). The segment at 386–751 (LLQKNAGPAF…MKAQVPETNA (366 aa)) is actin-binding, Ca-sensitive. Ca(2+) is bound by residues G430, D431, E461, D556, E578, D659, D660, and E682.

Belongs to the villin/gelsolin family. In terms of tissue distribution, tail muscle.

Its subcellular location is the cytoplasm. It localises to the cytoskeleton. In terms of biological role, calcium-regulated, actin-modulating protein that binds to the plus (or barbed) ends of actin monomers or filaments, preventing monomer exchange (end-blocking or capping). It can promote the assembly of monomers into filaments (nucleation) as well as sever filaments already formed. This Homarus americanus (American lobster) protein is Gelsolin, cytoplasmic.